Here is a 182-residue protein sequence, read N- to C-terminus: Probable pyruvoyl-dependent arginine decarboxylase (182 aa).

At serine 43 the chain carries Pyruvic acid (Ser).

Belongs to the PdaD family. Pyruvate is required as a cofactor.

The catalysed reaction is L-arginine + H(+) = agmatine + CO2. This chain is Probable pyruvoyl-dependent arginine decarboxylase, found in Chloroherpeton thalassium (strain ATCC 35110 / GB-78).